The chain runs to 133 residues: Arginine decarboxylase proenzyme (133 aa).

The Schiff-base intermediate with substrate; via pyruvic acid role is filled by serine 81. Serine 81 is modified (pyruvic acid (Ser); by autocatalysis). The active-site Proton acceptor; for processing activity is histidine 86. The Proton donor; for catalytic activity role is filled by cysteine 101.

It belongs to the prokaryotic AdoMetDC family. Type 1 subfamily. As to quaternary structure, heterooctamer of four alpha and four beta chains arranged as a tetramer of alpha/beta heterodimers. Requires pyruvate as cofactor. In terms of processing, is synthesized initially as an inactive proenzyme. Formation of the active enzyme involves a self-maturation process in which the active site pyruvoyl group is generated from an internal serine residue via an autocatalytic post-translational modification. Two non-identical subunits are generated from the proenzyme in this reaction, and the pyruvate is formed at the N-terminus of the alpha chain, which is derived from the carboxyl end of the proenzyme. The post-translation cleavage follows an unusual pathway, termed non-hydrolytic serinolysis, in which the side chain hydroxyl group of the serine supplies its oxygen atom to form the C-terminus of the beta chain, while the remainder of the serine residue undergoes an oxidative deamination to produce ammonia and the pyruvoyl group blocking the N-terminus of the alpha chain.

The catalysed reaction is L-arginine + H(+) = agmatine + CO2. It functions in the pathway amine and polyamine biosynthesis; agmatine biosynthesis; agmatine from L-arginine: step 1/1. Functionally, specifically catalyzes the decarboxylation of L-arginine to agmatine. Has no S-adenosylmethionine decarboxylase (AdoMetDC) activity. The sequence is that of Arginine decarboxylase proenzyme from Pyrobaculum arsenaticum (strain DSM 13514 / JCM 11321 / PZ6).